Here is a 657-residue protein sequence, read N- to C-terminus: Translation factor GUF1, mitochondrial (657 aa).

The transit peptide at 1–39 (MRGCLQSVKWLTSALRPSQSLASSTRYPRRLLSTSAPRN) directs the protein to the mitochondrion. In terms of domain architecture, tr-type G spans 59–239 (ERFRNFCIVA…TVIEQIPAPV (181 aa)). GTP contacts are provided by residues 121 to 128 (HQGEDYLL), 185 to 189 (INKVD), and 239 to 242 (VGDR).

This sequence belongs to the TRAFAC class translation factor GTPase superfamily. Classic translation factor GTPase family. LepA subfamily.

The protein localises to the mitochondrion inner membrane. It carries out the reaction GTP + H2O = GDP + phosphate + H(+). Its function is as follows. Promotes mitochondrial protein synthesis. May act as a fidelity factor of the translation reaction, by catalyzing a one-codon backward translocation of tRNAs on improperly translocated ribosomes. Binds to mitochondrial ribosomes in a GTP-dependent manner. The polypeptide is Translation factor GUF1, mitochondrial (Ajellomyces capsulatus (strain H143) (Darling's disease fungus)).